The chain runs to 346 residues: Ribosomal RNA small subunit methyltransferase H (346 aa).

Residues 46 to 48, Asp63, Phe90, Asp113, and Gln120 contribute to the S-adenosyl-L-methionine site; that span reads GGY. The segment at 270–346 is disordered; that stretch reads GGSAGSRHMP…LPETNELARS (77 aa).

Belongs to the methyltransferase superfamily. RsmH family.

The protein localises to the cytoplasm. The enzyme catalyses cytidine(1402) in 16S rRNA + S-adenosyl-L-methionine = N(4)-methylcytidine(1402) in 16S rRNA + S-adenosyl-L-homocysteine + H(+). Functionally, specifically methylates the N4 position of cytidine in position 1402 (C1402) of 16S rRNA. In Brucella suis (strain ATCC 23445 / NCTC 10510), this protein is Ribosomal RNA small subunit methyltransferase H.